Here is a 324-residue protein sequence, read N- to C-terminus: FCS-Like Zinc finger 11 (324 aa).

Residues 266-309 (NFLGICNFCNKKLGGGDDIYMYREKSFCSEECRSEEMMIDEEDL) form an FLZ-type zinc finger.

This sequence belongs to the FLZ family. In terms of assembly, interacts with KIN10 and KIN11 via its FLZ-type zinc finger domain. Forms heterodimer with FLZ2 in vitro.

Its subcellular location is the cytoplasm. The protein resides in the nucleus. In terms of biological role, may act as an adapter to facilitate the interaction of SnRK1 complex with effector proteins, conferring tissue- and stimulus-type specific differences in the SnRK1 regulation pathway. The polypeptide is FCS-Like Zinc finger 11 (Arabidopsis thaliana (Mouse-ear cress)).